Here is a 295-residue protein sequence, read N- to C-terminus: Malonyl-[acyl-carrier protein] O-methyltransferase (295 aa).

It belongs to the methyltransferase superfamily.

The enzyme catalyses malonyl-[ACP] + S-adenosyl-L-methionine = malonyl-[ACP] methyl ester + S-adenosyl-L-homocysteine. It participates in cofactor biosynthesis; biotin biosynthesis. Functionally, converts the free carboxyl group of a malonyl-thioester to its methyl ester by transfer of a methyl group from S-adenosyl-L-methionine (SAM). It allows to synthesize pimeloyl-ACP via the fatty acid synthetic pathway. In Xylella fastidiosa (strain M23), this protein is Malonyl-[acyl-carrier protein] O-methyltransferase.